Here is a 124-residue protein sequence, read N- to C-terminus: Small ribosomal subunit protein uS12 (124 aa).

3-methylthioaspartic acid is present on D89.

The protein belongs to the universal ribosomal protein uS12 family. In terms of assembly, part of the 30S ribosomal subunit. Contacts proteins S8 and S17. May interact with IF1 in the 30S initiation complex.

In terms of biological role, with S4 and S5 plays an important role in translational accuracy. Interacts with and stabilizes bases of the 16S rRNA that are involved in tRNA selection in the A site and with the mRNA backbone. Located at the interface of the 30S and 50S subunits, it traverses the body of the 30S subunit contacting proteins on the other side and probably holding the rRNA structure together. The combined cluster of proteins S8, S12 and S17 appears to hold together the shoulder and platform of the 30S subunit. In Pectobacterium atrosepticum (strain SCRI 1043 / ATCC BAA-672) (Erwinia carotovora subsp. atroseptica), this protein is Small ribosomal subunit protein uS12.